The primary structure comprises 582 residues: DBIRD complex subunit ZNF326 (582 aa).

A mediates transcriptional activation region spans residues 1–124; sequence MDFEDDYTHS…YRNSLDSFGG (124 aa). A phosphoserine mark is found at Ser-48, Ser-56, Ser-63, Ser-69, Ser-81, Ser-82, Ser-91, Ser-106, Ser-114, Ser-118, Ser-121, and Ser-137. Lys-140 is covalently cross-linked (Glycyl lysine isopeptide (Lys-Gly) (interchain with G-Cter in SUMO2)). Residues 154–194 are disordered; the sequence is YSSYSSFSSPHMKPAPVGSRGRGTPAYPESTFGSRNYDAFG. Arg-173 carries the post-translational modification Omega-N-methylarginine. Position 212 is a phosphoserine (Ser-212). Position 235 is an omega-N-methylarginine (Arg-235). The Bipartite nuclear localization signal signature appears at 238-260; that stretch reads KRKMMQPFNKPSGTFIKKPKLAK. Residue Lys-240 forms a Glycyl lysine isopeptide (Lys-Gly) (interchain with G-Cter in SUMO2) linkage. The disordered stretch occupies residues 243 to 302; the sequence is QPFNKPSGTFIKKPKLAKPMEKISLSKSPTKTDPKNEEEEKRRIEARREKQRRRREKNSE. Lys-247 is modified (N6-acetyllysine; alternate). A Glycyl lysine isopeptide (Lys-Gly) (interchain with G-Cter in SUMO2); alternate cross-link involves residue Lys-247. Residue Ser-249 is modified to Phosphoserine. Residue Thr-251 is modified to Phosphothreonine. Residues Lys-254 and Lys-264 each participate in a glycyl lysine isopeptide (Lys-Gly) (interchain with G-Cter in SUMO2) cross-link. Ser-270 carries the post-translational modification Phosphoserine. Residues 272–290 show a composition bias toward basic and acidic residues; the sequence is TKTDPKNEEEEKRRIEARR. The C2H2 AKAP95-type 1 zinc-finger motif lies at 314–336; it reads CSFCKFRTFEEKDIELHLESSSH. Lys-401 participates in a covalent cross-link: Glycyl lysine isopeptide (Lys-Gly) (interchain with G-Cter in SUMO2). The C2H2 AKAP95-type 2 zinc-finger motif lies at 407–430; that stretch reads CSACSVYIPALHSSVQQHLKSPDH. Residues Lys-459 and Lys-467 each participate in a glycyl lysine isopeptide (Lys-Gly) (interchain with G-Cter in SUMO2) cross-link. Positions 472 to 582 are disordered; sequence FEIQDHSQDQ…DFPVEQPEEN (111 aa). The segment covering 483 to 523 has biased composition (acidic residues); it reads IEGDEEDEEKIDEPIEEEEDEDEEEEAEEVGEVEEVEEVEE. The segment covering 530–545 has biased composition (gly residues); sequence EGEGNIQGVGEGGEVG. The span at 552 to 567 shows a compositional bias: acidic residues; the sequence is GVGEVEEVEELEEETA.

It belongs to the AKAP95 family. Component of the DBIRD complex. Interacts with CCAR2; the interaction is direct.

It is found in the nucleus matrix. Functionally, core component of the DBIRD complex, a multiprotein complex that acts at the interface between core mRNP particles and RNA polymerase II (RNAPII) and integrates transcript elongation with the regulation of alternative splicing: the DBIRD complex affects local transcript elongation rates and alternative splicing of a large set of exons embedded in (A + T)-rich DNA regions. May play a role in neuronal differentiation and is able to bind DNA and activate expression in vitro. The chain is DBIRD complex subunit ZNF326 (ZNF326) from Homo sapiens (Human).